The following is a 78-amino-acid chain: Large ribosomal subunit protein bL28 (78 aa).

A disordered region spans residues 1–24 (MSRVCQVTGKRPAVGNNRSHANNA).

Belongs to the bacterial ribosomal protein bL28 family.

The polypeptide is Large ribosomal subunit protein bL28 (Aeromonas salmonicida (strain A449)).